The primary structure comprises 87 residues: Antitoxin epsilon (87 aa).

The protein belongs to the epsilon antitoxin family. In terms of assembly, in the presence of the zeta toxin, forms an inactive PezA(2)PezT(2) heterotetramer.

In terms of biological role, antitoxin component of a type II toxin-antitoxin (TA) system. Neutralizes the toxic effect of cognate zeta toxin. Part of a postsegregational killing (PSK) system involved in the killing of plasmid-free cells. Continuous synthesis of the epsilon antitoxin is required to counteract the zeta toxin. This is Antitoxin epsilon from Lactococcus lactis subsp. lactis (Streptococcus lactis).